The sequence spans 391 residues: GATA-binding factor 6-B (391 aa).

Over residues 57–69 (GTHSVNSHWSQAT) the composition is skewed to polar residues. The segment at 57–107 (GTHSVNSHWSQATSESSSYSSSSPHPSSRYHYSPSPPMANGSTRDTGYSSS) is disordered. The segment covering 70–89 (SESSSYSSSSPHPSSRYHYS) has biased composition (low complexity). The segment covering 96-107 (NGSTRDTGYSSS) has biased composition (polar residues). GATA-type zinc fingers lie at residues 182–206 (CVNCGSVQTPLWRRDGTGHYLCNAC) and 236–260 (CANCHTTTTTLWRRNTEGEPVCNAC). The tract at residues 277-334 (KEGIQTRKRKPKNLNKSKSSSSNGNSSHHITMTPTSTTSSTNSDDCIKNGSPSQNTAP) is disordered. Positions 282-291 (TRKRKPKNLN) are enriched in basic residues. The segment covering 292-319 (KSKSSSSNGNSSHHITMTPTSTTSSTNS) has biased composition (low complexity).

In terms of tissue distribution, in embryos, expressed in the presumptive heart mesoderm. In adults, widely distributed but predominant in the heart.

The protein localises to the nucleus. Functionally, transcriptional activator that binds 5'-GATA-3'-containing motifs within gene promoters. Regulates cardiac-specific transcription during embryogenesis and thereby cardiogenesis. This Xenopus laevis (African clawed frog) protein is GATA-binding factor 6-B (gata6-b).